A 220-amino-acid chain; its full sequence is Uracil-DNA glycosylase (220 aa).

Residue Asp-60 is the Proton acceptor of the active site.

Belongs to the uracil-DNA glycosylase (UDG) superfamily. UNG family.

Its subcellular location is the cytoplasm. The catalysed reaction is Hydrolyzes single-stranded DNA or mismatched double-stranded DNA and polynucleotides, releasing free uracil.. Functionally, excises uracil residues from the DNA which can arise as a result of misincorporation of dUMP residues by DNA polymerase or due to deamination of cytosine. The chain is Uracil-DNA glycosylase from Francisella tularensis subsp. novicida (strain U112).